The chain runs to 783 residues: Putative ATP-dependent DNA helicase fml2 (783 aa).

The 169-residue stretch at Phe-118–Lys-286 folds into the Helicase ATP-binding domain. An ATP-binding site is contributed by Leu-131–Thr-138. A DEAH box motif is present at residues Asp-234–His-237. The Helicase C-terminal domain maps to Lys-450–Val-619.

This sequence belongs to the DEAD box helicase family. DEAH subfamily. FANCM sub-subfamily.

Its subcellular location is the nucleus. It localises to the nucleolus. The catalysed reaction is ATP + H2O = ADP + phosphate + H(+). The chain is Putative ATP-dependent DNA helicase fml2 from Schizosaccharomyces pombe (strain 972 / ATCC 24843) (Fission yeast).